Reading from the N-terminus, the 284-residue chain is Bifunctional protein FolD (284 aa).

Residues 166-168 and isoleucine 232 contribute to the NADP(+) site; that span reads GAS.

It belongs to the tetrahydrofolate dehydrogenase/cyclohydrolase family. As to quaternary structure, homodimer.

It catalyses the reaction (6R)-5,10-methylene-5,6,7,8-tetrahydrofolate + NADP(+) = (6R)-5,10-methenyltetrahydrofolate + NADPH. The catalysed reaction is (6R)-5,10-methenyltetrahydrofolate + H2O = (6R)-10-formyltetrahydrofolate + H(+). It participates in one-carbon metabolism; tetrahydrofolate interconversion. Catalyzes the oxidation of 5,10-methylenetetrahydrofolate to 5,10-methenyltetrahydrofolate and then the hydrolysis of 5,10-methenyltetrahydrofolate to 10-formyltetrahydrofolate. The polypeptide is Bifunctional protein FolD (Pseudomonas entomophila (strain L48)).